The primary structure comprises 318 residues: NADH-ubiquinone oxidoreductase chain 1 (318 aa).

8 consecutive transmembrane segments (helical) span residues 2–22 (FLIN…FLTL), 69–89 (FLFT…WAPL), 102–122 (LLFI…SGWA), 146–166 (MTTI…TAFA), 171–191 (HLWL…STLA), 222–242 (LFFM…VILF), 253–273 (EIST…FLWV), and 294–314 (LPLT…LACI).

The protein belongs to the complex I subunit 1 family. Core subunit of respiratory chain NADH dehydrogenase (Complex I) which is composed of 45 different subunits.

The protein resides in the mitochondrion inner membrane. The enzyme catalyses a ubiquinone + NADH + 5 H(+)(in) = a ubiquinol + NAD(+) + 4 H(+)(out). Functionally, core subunit of the mitochondrial membrane respiratory chain NADH dehydrogenase (Complex I) which catalyzes electron transfer from NADH through the respiratory chain, using ubiquinone as an electron acceptor. Essential for the catalytic activity and assembly of complex I. This Elephas maximus (Indian elephant) protein is NADH-ubiquinone oxidoreductase chain 1 (MT-ND1).